The primary structure comprises 212 residues: Imidazole glycerol phosphate synthase subunit HisH (212 aa).

The Glutamine amidotransferase type-1 domain occupies 4-210 (NIGIIDYGMG…LKWLHEKNSD (207 aa)). The Nucleophile role is filled by cysteine 82. Active-site residues include histidine 185 and glutamate 187.

In terms of assembly, heterodimer of HisH and HisF.

It is found in the cytoplasm. The enzyme catalyses 5-[(5-phospho-1-deoxy-D-ribulos-1-ylimino)methylamino]-1-(5-phospho-beta-D-ribosyl)imidazole-4-carboxamide + L-glutamine = D-erythro-1-(imidazol-4-yl)glycerol 3-phosphate + 5-amino-1-(5-phospho-beta-D-ribosyl)imidazole-4-carboxamide + L-glutamate + H(+). It catalyses the reaction L-glutamine + H2O = L-glutamate + NH4(+). It functions in the pathway amino-acid biosynthesis; L-histidine biosynthesis; L-histidine from 5-phospho-alpha-D-ribose 1-diphosphate: step 5/9. Its function is as follows. IGPS catalyzes the conversion of PRFAR and glutamine to IGP, AICAR and glutamate. The HisH subunit catalyzes the hydrolysis of glutamine to glutamate and ammonia as part of the synthesis of IGP and AICAR. The resulting ammonia molecule is channeled to the active site of HisF. The chain is Imidazole glycerol phosphate synthase subunit HisH from Prochlorococcus marinus (strain MIT 9211).